The following is a 208-amino-acid chain: Small ribosomal subunit protein uS4 (208 aa).

In terms of domain architecture, S4 RNA-binding spans 98-160; it reads RRLDNVVYRM…SKNNVQIQRA (63 aa).

This sequence belongs to the universal ribosomal protein uS4 family. Part of the 30S ribosomal subunit. Contacts protein S5. The interaction surface between S4 and S5 is involved in control of translational fidelity.

Its function is as follows. One of the primary rRNA binding proteins, it binds directly to 16S rRNA where it nucleates assembly of the body of the 30S subunit. Functionally, with S5 and S12 plays an important role in translational accuracy. This chain is Small ribosomal subunit protein uS4, found in Nautilia profundicola (strain ATCC BAA-1463 / DSM 18972 / AmH).